A 430-amino-acid polypeptide reads, in one-letter code: Serine--tRNA ligase (430 aa).

237-239 provides a ligand contact to L-serine; the sequence is TAE. Residue 268–270 coordinates ATP; sequence RSE. L-serine is bound at residue Glu-291. 355-358 lines the ATP pocket; that stretch reads EISS. Ser-391 is a binding site for L-serine.

The protein belongs to the class-II aminoacyl-tRNA synthetase family. Type-1 seryl-tRNA synthetase subfamily. Homodimer. The tRNA molecule binds across the dimer.

The protein resides in the cytoplasm. It carries out the reaction tRNA(Ser) + L-serine + ATP = L-seryl-tRNA(Ser) + AMP + diphosphate + H(+). The enzyme catalyses tRNA(Sec) + L-serine + ATP = L-seryl-tRNA(Sec) + AMP + diphosphate + H(+). Its pathway is aminoacyl-tRNA biosynthesis; selenocysteinyl-tRNA(Sec) biosynthesis; L-seryl-tRNA(Sec) from L-serine and tRNA(Sec): step 1/1. Catalyzes the attachment of serine to tRNA(Ser). Is also able to aminoacylate tRNA(Sec) with serine, to form the misacylated tRNA L-seryl-tRNA(Sec), which will be further converted into selenocysteinyl-tRNA(Sec). The sequence is that of Serine--tRNA ligase from Escherichia fergusonii (strain ATCC 35469 / DSM 13698 / CCUG 18766 / IAM 14443 / JCM 21226 / LMG 7866 / NBRC 102419 / NCTC 12128 / CDC 0568-73).